A 583-amino-acid polypeptide reads, in one-letter code: Phytoene desaturase (583 aa).

An N-terminal signal peptide occupies residues 1-20 (MAPPKHVIIIGAGAGGTATA). Residues 531–551 (IIWFLLIALFAATLVLFIAFP) traverse the membrane as a helical segment.

It belongs to the carotenoid/retinoid oxidoreductase family. It depends on NAD(+) as a cofactor.

The protein localises to the membrane. It catalyses the reaction 15-cis-phytoene + 5 A = all-trans-3,4-didehydrolycopene + 5 AH2. Its pathway is carotenoid biosynthesis; lycopene biosynthesis. Functionally, phytoene desaturase involved in the carotenoid biosynthesis pathway. Converts phytoene into 3,4-didehydrolycopene via the intermediary of phytofluene, zeta-carotene, neurosporene and lycopene, by introducing up to five double bonds into phytoene. The chain is Phytoene desaturase (carB) from Phycomyces blakesleeanus (strain ATCC 8743b / DSM 1359 / FGSC 10004 / NBRC 33097 / NRRL 1555).